A 357-amino-acid polypeptide reads, in one-letter code: Trans-enoyl reductase buaC (357 aa).

Position 50 to 53 (50 to 53 (VDTK)) interacts with NADP(+). 135 to 142 (TALVSACM) contributes to the substrate binding site. Residues 170-173 (STAT), 193-196 (SPKN), Tyr211, and 258-259 (LN) each bind NADP(+). Position 278–282 (278–282 (ATLIT)) interacts with substrate. An NADP(+)-binding site is contributed by 347 to 348 (IS).

This sequence belongs to the zinc-containing alcohol dehydrogenase family. As to quaternary structure, monomer.

The protein operates within mycotoxin biosynthesis. In terms of biological role, trans-enoyl reductase; part of the gene cluster that mediates the biosynthesis of burnettramic acids, an unusual class of bolaamphiphilic pyrrolizidinediones that display potent antibacterial, antifungal, and cytotoxic activities. The first step of the biosynthesis of burnettramic acids is the hydroxylation of proline by the proline hydroxylase buaE to generate 4-hydroxyproline. The PKS-NRPS buaA and trans-enoyl reductase buaC construct the highly reduced polyketide chain, and the condensation (C) domain of buaA then catalyzes the amide bond formation with the activated 4-hydroxyproline. This is followed by the R domain releasing the nascent polyketide-peptide directly via a Dieckmann condensation to afford a tetramic acid fused to the hydroxyproline, generating the bicyclic pyrrolidinedione moiety. The cytochrome P450 monooxygenases buaD and buaG are likely responsible for the multiple hydroxylations on the polyketide chain and its terminus, although in the heterologous context, buaD does not appear to be required. Therefore, while buaG may be a multifunctional cytochrome P450 monooxygenase, it cannot be ruled out that the two secondary alcohols on the polyketide chain could have an acetate origin. Finally, the glycosyltransferase buaB transfers beta-D-mannose to the aglycone burnettramic acid A to form burnettramic acid A. Burnettramic acid B is a minor cis-pyrrolizidine epimer of burnettramic acid A and it is likely that small amounts of it form naturally in acidic environments. This Petromyces alliaceus (Aspergillus alliaceus) protein is Trans-enoyl reductase buaC.